The primary structure comprises 62 residues: Photosystem II reaction center protein Z (62 aa).

Helical transmembrane passes span 8–28 (ALFA…VILA) and 41–61 (FSGA…NSFI).

It belongs to the PsbZ family. In terms of assembly, PSII is composed of 1 copy each of membrane proteins PsbA, PsbB, PsbC, PsbD, PsbE, PsbF, PsbH, PsbI, PsbJ, PsbK, PsbL, PsbM, PsbT, PsbY, PsbZ, Psb30/Ycf12, at least 3 peripheral proteins of the oxygen-evolving complex and a large number of cofactors. It forms dimeric complexes.

The protein resides in the plastid. It localises to the chloroplast thylakoid membrane. Functionally, may control the interaction of photosystem II (PSII) cores with the light-harvesting antenna, regulates electron flow through the 2 photosystem reaction centers. PSII is a light-driven water plastoquinone oxidoreductase, using light energy to abstract electrons from H(2)O, generating a proton gradient subsequently used for ATP formation. This chain is Photosystem II reaction center protein Z, found in Chara vulgaris (Common stonewort).